Reading from the N-terminus, the 251-residue chain is L-ascorbate peroxidase 2, cytosolic (251 aa).

Catalysis depends on His-43, which acts as the Proton acceptor. His-163 serves as a coordination point for heme b. Thr-164, Thr-180, Asn-182, Ile-185, and Asp-187 together coordinate K(+).

This sequence belongs to the peroxidase family. Ascorbate peroxidase subfamily. Heme b serves as cofactor. Detected in bundle sheath cells, the photosynthetic cells that surround the phloem and xylem.

The protein localises to the cytoplasm. It catalyses the reaction L-ascorbate + H2O2 = L-dehydroascorbate + 2 H2O. Functionally, plays a key role in hydrogen peroxide removal. This is L-ascorbate peroxidase 2, cytosolic from Arabidopsis thaliana (Mouse-ear cress).